A 280-amino-acid chain; its full sequence is Probable protein VP2 (280 aa).

2 disordered regions span residues 46–167 (LGAG…FFTS) and 200–280 (AQLS…TYSN). Positions 65–81 (PEGPGGPPQHAPPNPPP) are enriched in pro residues. The span at 90–100 (RGGGAGGAGDG) shows a compositional bias: gly residues. A compositionally biased stretch (acidic residues) spans 106–117 (DAAEEYGPEDLD). The span at 227-251 (AKTRRRVKKKPLSSKNKHTKKKKRS) shows a compositional bias: basic residues. Over residues 252 to 266 (YSSSSPSSKDNTSES) the composition is skewed to low complexity.

Post-translationally, phosphorylated at C-terminal serines.

This chain is Probable protein VP2, found in Homo sapiens (Human).